A 287-amino-acid polypeptide reads, in one-letter code: ATP synthase gamma chain (287 aa).

The protein belongs to the ATPase gamma chain family. As to quaternary structure, F-type ATPases have 2 components, CF(1) - the catalytic core - and CF(0) - the membrane proton channel. CF(1) has five subunits: alpha(3), beta(3), gamma(1), delta(1), epsilon(1). CF(0) has three main subunits: a, b and c.

It localises to the cell inner membrane. Its function is as follows. Produces ATP from ADP in the presence of a proton gradient across the membrane. The gamma chain is believed to be important in regulating ATPase activity and the flow of protons through the CF(0) complex. The polypeptide is ATP synthase gamma chain (Stenotrophomonas maltophilia (strain R551-3)).